The chain runs to 237 residues: Synapse differentiation-inducing gene protein 1-like (237 aa).

3 disordered regions span residues 1-23, 84-111, and 127-148; these read MESL…HRPY, AGSC…PGQA, and ELQG…ESEC. At 1–161 the chain is on the extracellular side; it reads MESLSELQNP…FLTLPPRDHL (161 aa). Residues 129 to 148 show a composition bias toward acidic residues; it reads QGQEDSQEEESDGTSSESEC. Residues 162–182 traverse the membrane as a helical segment; the sequence is GLTLFSMLCCFWPLGIAAFYF. At 183–204 the chain is on the cytoplasmic side; that stretch reads SQGTSKAISKGDFRLASTTSRR. A helical membrane pass occupies residues 205-225; sequence ALFLATLSIAVGAGLYVAVVV. Residues 226–237 lie on the Extracellular side of the membrane; sequence ALAAYMSQNGHG.

This sequence belongs to the CD225/Dispanin family. Expression is restricted to the caudate-putamen. Down-regulated in R6/2 transgenic mice, a model for Huntington disease.

Its subcellular location is the membrane. It localises to the golgi apparatus. The protein resides in the cis-Golgi network. The sequence is that of Synapse differentiation-inducing gene protein 1-like (Syndig1l) from Mus musculus (Mouse).